Reading from the N-terminus, the 1238-residue chain is Multifunctional 2-oxoglutarate metabolism enzyme (1238 aa).

The 2-oxoglutarate dehydrogenase E1, N-terminal part stretch occupies residues 1 to 41; that stretch reads MANISSPFGQNEWLVEEMYRKFRDDPSSVDPSWHEFLVDYN. Residues 42–97 are linker; that stretch reads PESTAEPVLTDPTSTDKQPSATPQAKPAAAADPVASRAKPATTPTVANGTAAGSAA. Residues 44-108 form a disordered region; sequence STAEPVLTDP…PAKTTTTPPI (65 aa). Positions 59–107 are enriched in low complexity; that stretch reads QPSATPQAKPAAAADPVASRAKPATTPTVANGTAAGSAAAPAKTTTTPP. The interval 98–346 is succinyltransferase E2; that stretch reads APAKTTTTPP…LRTIHEMVLS (249 aa). The active-site Proton acceptor; for succinyltransferase activity is H325. The interval 347-1238 is 2-oxoglutarate dehydrogenase E1, C-terminal part; it reads DSFWDEIFRE…QQEILDTAFG (892 aa). Thiamine diphosphate is bound at residue R551. 2-oxoglutarate-binding residues include H590 and S615. Residues S615, L617, D657, A658, A659, and N690 each contribute to the thiamine diphosphate site. D657 serves as a coordination point for Mg(2+). Residues N690 and I692 each contribute to the Mg(2+) site. The stretch at 795–825 forms a coiled coil; it reads DISLKEAEDALRDYQGQLERVFNEVRDLEKH. H1032 is a 2-oxoglutarate binding site. Residues T1050, R1066, K1101, S1104, Q1154, R1161, and R1162 each coordinate acetyl-CoA.

This sequence belongs to the 2-oxoacid dehydrogenase family. Kgd subfamily. As to quaternary structure, homodimer. The 2-oxoglutarate dehydrogenase (ODH) complex contains multiple copies of three enzymatic components: 2-oxoglutarate dehydrogenase (E1), dihydrolipoamide succinyltransferase (E2) and lipoamide dehydrogenase (E3). The cofactor is Mg(2+). Thiamine diphosphate serves as cofactor.

The catalysed reaction is glyoxylate + 2-oxoglutarate + H(+) = 2-hydroxy-3-oxoadipate + CO2. The enzyme catalyses 2-oxoglutarate + H(+) = succinate semialdehyde + CO2. It carries out the reaction N(6)-[(R)-lipoyl]-L-lysyl-[protein] + 2-oxoglutarate + H(+) = N(6)-[(R)-S(8)-succinyldihydrolipoyl]-L-lysyl-[protein] + CO2. It catalyses the reaction N(6)-[(R)-dihydrolipoyl]-L-lysyl-[protein] + succinyl-CoA = N(6)-[(R)-S(8)-succinyldihydrolipoyl]-L-lysyl-[protein] + CoA. It participates in carbohydrate metabolism; tricarboxylic acid cycle; succinate from 2-oxoglutarate (transferase route): step 1/2. It functions in the pathway carbohydrate metabolism; tricarboxylic acid cycle; succinyl-CoA from 2-oxoglutarate (dehydrogenase route): step 1/1. Its activity is regulated as follows. Alpha-ketoglutarate dehydrogenase and decarboxylase activities are inhibited by unphosphorylated GarA, and allosterically activated by acetyl-CoA, the main substrate of the TCA cycle. Its function is as follows. Shows three enzymatic activities that share a first common step, the attack of thiamine-PP on 2-oxoglutarate (alpha-ketoglutarate, KG), leading to the formation of an enamine-thiamine-PP intermediate upon decarboxylation. Thus, displays KGD activity, catalyzing the decarboxylation from five-carbon 2-oxoglutarate to four-carbon succinate semialdehyde (SSA). Also catalyzes C-C bond formation between the activated aldehyde formed after decarboxylation of alpha-ketoglutarate and the carbonyl of glyoxylate (GLX), to yield 2-hydroxy-3-oxoadipate (HOA), which spontaneously decarboxylates to form 5-hydroxylevulinate (HLA). And is also a component of the 2-oxoglutarate dehydrogenase (ODH) complex, that catalyzes the overall conversion of 2-oxoglutarate to succinyl-CoA and CO(2). The KG decarboxylase and KG dehydrogenase reactions provide two alternative, tightly regulated, pathways connecting the oxidative and reductive branches of the TCA cycle. The protein is Multifunctional 2-oxoglutarate metabolism enzyme (kgd) of Mycobacterium leprae (strain TN).